The following is a 553-amino-acid chain: Mannuronan C5-epimerase AlgE4 (553 aa).

8 PbH1 repeats span residues 133–155 (DRDV…DPHE), 157–179 (TINL…VADY), 180–202 (LVDS…NVVT), 204–226 (THDF…VVQR), 234–256 (PSNI…LLKM), 257–279 (TSDI…RVYG), 280–301 (AQDV…AVPE), and 320–342 (TLNT…GIQE). The segment at 367-427 (YGPHSTVSGE…DILDGGAGRD (61 aa)) is disordered. Hemolysin-type calcium-binding repeat units lie at residues 403–420 (QGGS…DDIL) and 421–438 (DGGA…ADTF).

This sequence belongs to the D-mannuronate C5-epimerase family. Requires Ca(2+) as cofactor.

The protein localises to the secreted. The enzyme catalyses [(1-&gt;4)-beta-D-mannuronosyl](n) = [alginate](n). It participates in glycan biosynthesis; alginate biosynthesis. Inhibited by zinc. In terms of biological role, converts beta-D-mannuronic acid (M) to alpha-L-guluronic acid (G), but introduces almost exclusively MG blocks, producing a polymer with non-gel-forming capacity. The protein is Mannuronan C5-epimerase AlgE4 of Azotobacter vinelandii.